Here is a 671-residue protein sequence, read N- to C-terminus: Transcriptional regulator Kaiso (671 aa).

The interval 1–103 (MESRKLISAT…RADLLDELIK (103 aa)) is interaction with NCOR1. Positions 1–136 (MESRKLISAT…SGTEQDGTAE (136 aa)) are self-association. The region spanning 32–94 (CDVTVIVEDR…IYSSKVVRVR (63 aa)) is the BTB domain. Polar residues predominate over residues 127-144 (SGTEQDGTAETLPSSSSD). The segment at 127 to 161 (SGTEQDGTAETLPSSSSDKSLDMEKSKDEAQDNGA) is disordered. The segment covering 145–156 (KSLDMEKSKDEA) has biased composition (basic and acidic residues). Glycyl lysine isopeptide (Lys-Gly) (interchain with G-Cter in SUMO2) cross-links involve residues lysine 151 and lysine 153. Residue threonine 251 is modified to Phosphothreonine. Residues 298-571 (LPNHMSSSVN…FMSSHIKSVH (274 aa)) are interaction with CBFA2T3. The disordered stretch occupies residues 332–365 (IIDDDDDIISSSPDSAVSNTSLVPQADNSKSTTL). Polar residues predominate over residues 347–365 (AVSNTSLVPQADNSKSTTL). Residues lysine 388, lysine 405, lysine 412, and lysine 447 each participate in a glycyl lysine isopeptide (Lys-Gly) (interchain with G-Cter in SUMO2) cross-link. Basic and acidic residues predominate over residues 451–461 (DGGEAKLDNEL). Residues 451–474 (DGGEAKLDNELPKTSGSEPPNKRM) are disordered. Residues 452-671 (GGEAKLDNEL…EFEFIIPESY (220 aa)) are interaction with CTNND1. Residues lysine 463, lysine 472, and lysine 477 each participate in a glycyl lysine isopeptide (Lys-Gly) (interchain with G-Cter in SUMO2) cross-link. The short motif at 469–478 (PPNKRMKVKH) is the Nuclear localization signal element. 3 consecutive C2H2-type zinc fingers follow at residues 492–514 (YICI…FNIH), 520–542 (YQCR…EIHH), and 548–571 (YQCL…KSVH). The required for DNA-binding stretch occupies residues 512–637 (NIHSWEKKYQ…TSTPPQNKST (126 aa)). Glycyl lysine isopeptide (Lys-Gly) (interchain with G-Cter in SUMO2) cross-links involve residues lysine 537, lysine 568, lysine 580, lysine 609, and lysine 616.

In terms of assembly, interacts with NCOR1. Self-associates. Interacts with CTNND1, and this interaction inhibits binding to both methylated and non-methylated DNA. Interacts with CTNND2. Interacts with KPNA2/RCH1, which may mediate nuclear import of this protein. Interacts with CBFA2T3. Expressed in brain, heart, kidney, liver, lung, neuromuscular junctions, skeletal muscle, spleen and testis.

The protein localises to the nucleus. Transcriptional regulator with bimodal DNA-binding specificity. Binds to methylated CpG dinucleotides in the consensus sequence 5'-CGCG-3' and also binds to the non-methylated consensus sequence 5'-CTGCNA-3' also known as the consensus kaiso binding site (KBS). May recruit the N-CoR repressor complex to promote histone deacetylation and the formation of repressive chromatin structures in target gene promoters. Contributes to the repression of target genes of the Wnt signaling pathway. May also activate transcription of a subset of target genes by the recruitment of CTNND2. Represses expression of MMP7 in conjunction with transcriptional corepressors CBFA2T3, CBFA2T2 and RUNX1T1. The chain is Transcriptional regulator Kaiso (Zbtb33) from Mus musculus (Mouse).